A 362-amino-acid chain; its full sequence is Histidine protein methyltransferase 1 homolog (362 aa).

A disordered region spans residues 28–89 (KSQKGKEDKN…ACEKQPSLKP (62 aa)). A compositionally biased stretch (polar residues) spans 55–73 (SLGSAASSEDTDSPPSTAD). Ser-62 and Ser-67 each carry phosphoserine. His-144 is subject to Tele-methylhistidine. S-adenosyl-L-methionine-binding positions include 158–162 (IWECT), Gly-185, and 206–208 (QDY). Positions 237–243 (PAGKRQR) match the Nuclear localization signal motif. Residues 259–261 (GEW) and Ser-283 contribute to the S-adenosyl-L-methionine site.

It belongs to the methyltransferase superfamily. METTL18 family. Interacts with GRWD1 and members of the heat shock protein 90 and 70 families; these proteins may possibly be methylation substrates for the enzyme. In terms of processing, monomethylated at His-144 through automethylation. Automethylation at His-144 positively regulates the methyltransferase activity toward RPL3. Probably methylated on other residues.

It is found in the cytoplasm. The protein localises to the cytosol. It localises to the nucleus. Its subcellular location is the nucleolus. It catalyses the reaction L-histidyl-[protein] + S-adenosyl-L-methionine = N(tele)-methyl-L-histidyl-[protein] + S-adenosyl-L-homocysteine + H(+). Protein-L-histidine N-tele-methyltransferase that specifically monomethylates RPL3, thereby regulating translation elongation. Histidine methylation of RPL3 regulates translation elongation by slowing ribosome traversal on tyrosine codons: slower elongation provides enough time for proper folding of synthesized proteins and prevents cellular aggregation of tyrosine-rich proteins. This Rattus norvegicus (Rat) protein is Histidine protein methyltransferase 1 homolog.